The sequence spans 84 residues: UPF0386 protein Oant_1614 (84 aa).

It belongs to the UPF0386 family.

The chain is UPF0386 protein Oant_1614 from Brucella anthropi (strain ATCC 49188 / DSM 6882 / CCUG 24695 / JCM 21032 / LMG 3331 / NBRC 15819 / NCTC 12168 / Alc 37) (Ochrobactrum anthropi).